The following is a 150-amino-acid chain: Alkaline nuclease (150 aa).

Belongs to the baculo-herpesviridae alkaline nuclease family.

The protein is Alkaline nuclease (UL12) of Suid herpesvirus 1 (strain NIA-3) (SuHV-1).